The following is a 1394-amino-acid chain: Cyclic nucleotide-gated channel beta-1 (1394 aa).

3 disordered regions span residues M1 to S95, V112 to A253, and V271 to S675. At M1–I762 the chain is on the cytoplasmic side. 2 stretches are compositionally biased toward polar residues: residues P68–V86 and A116–I125. Basic and acidic residues-rich tracts occupy residues E300–H312 and D336–E355. Positions E356–E387 are enriched in acidic residues. Residues E388–K408 show a composition bias toward basic and acidic residues. Over residues E409–D418 the composition is skewed to acidic residues. Positions E419–E433 are enriched in basic and acidic residues. 2 stretches are compositionally biased toward acidic residues: residues E452–Q464 and D481–D490. Low complexity-rich tracts occupy residues E493–A508 and E529–Q554. Residues D654–S675 are compositionally biased toward polar residues. Residues A671 to R681 form a calmodulin-binding CaM1 region. Positions L682–R692 match the IQ-like motif. Positions K699 to A732 are disordered. Residues D763–A793 form a helical membrane-spanning segment. The Extracellular segment spans residues F794–T798. The chain crosses the membrane as a helical span at residues P799–M825. At R826–T837 the chain is on the cytoplasmic side. The chain crosses the membrane as a helical span at residues D838–P861. Over L862–N872 the chain is Extracellular. A helical transmembrane segment spans residues P873 to F887. The Cytoplasmic segment spans residues E888 to A900. Positions A900 to A999 are ion conduction pathway. Residues Y901–L922 traverse the membrane as a helical segment. At Y923 to G931 the chain is on the extracellular side. A run of 2 helical transmembrane segments spans residues L932–F974 and Q975–A1002. The segment at T959–G962 is selectivity filter. The Cytoplasmic portion of the chain corresponds to G1003 to E1394. Residues R1082–L1198 are cyclic nucleotide-binding domain. Residues G1143, E1144, S1146, R1156, and T1157 each coordinate 3',5'-cyclic GMP. Residue R1156 participates in 3',5'-cyclic AMP binding. The tract at residues Q1261–Q1267 is calmodulin-binding CaM2. A disordered region spans residues L1265–E1394. Residues E1285–A1326 show a composition bias toward pro residues. Basic and acidic residues-rich tracts occupy residues E1329–V1345 and V1364–E1376.

Belongs to the cyclic nucleotide-gated cation channel (TC 1.A.1.5) family. CNGB1 subfamily. The rod cyclic nucleotide-gated channel is a heterotetramer composed of CNGA1 and CNGB1 subunits with 3:1 stoichiometry. CNGA1:CNGB1 channel binds Ca(2+)-bound CALM1 via CaM1 and CaM2 regions of the CNGB1 subunit; this interaction modulates the affinity of the channel for cNMPs in response to intracellular Ca(2+) levels. The olfactory cyclic nucleotide-gated channel is a heterotetramer composed of CNGA2, CNGA4 and CNGB1 subunits with 2:1:1 stoichiometry. In terms of tissue distribution, retina, testis, kidney, heart and brain.

The protein resides in the membrane. The enzyme catalyses Ca(2+)(in) = Ca(2+)(out). It carries out the reaction Na(+)(in) = Na(+)(out). The catalysed reaction is K(+)(in) = K(+)(out). It catalyses the reaction NH4(+)(in) = NH4(+)(out). The enzyme catalyses Rb(+)(in) = Rb(+)(out). It carries out the reaction Li(+)(in) = Li(+)(out). The catalysed reaction is Cs(+)(in) = Cs(+)(out). In terms of biological role, pore-forming subunit of the rod cyclic nucleotide-gated channel. Mediates rod photoresponses at dim light converting transient changes in intracellular cGMP levels into electrical signals. In the dark, cGMP levels are high and keep the channel open enabling a steady inward current carried by Na(+) and Ca(2+) ions that leads to membrane depolarization and neurotransmitter release from synaptic terminals. Upon photon absorption cGMP levels decline leading to channel closure and membrane hyperpolarization that ultimately slows neurotransmitter release and signals the presence of light, the end point of the phototransduction cascade. Pore-forming subunit of the olfactory cyclic nucleotide-gated channel. Operates in the cilia of olfactory sensory neurons where chemical stimulation of the odorant is converted to an electrical signal. Mediates odorant-induced cAMP-dependent Ca(2+) influx triggering neuron depolarization. The rise of intracellular Ca(2+) levels potentiates the olfactory response by activating Ca(2+)-dependent Cl(-) channels, but it also serves as a negative feedback signal to desensitize the channel for rapid adaptation to odorants. Conducts cGMP- and cAMP-gated ion currents, with permeability for monovalent and divalent cations. The selectivity for Ca(2+) over Na(+) increases with cGMP concentrations, whereas the selectivity among monovalent ions is independent of the cGMP levels. The polypeptide is Cyclic nucleotide-gated channel beta-1 (Bos taurus (Bovine)).